We begin with the raw amino-acid sequence, 196 residues long: 3-isopropylmalate dehydratase small subunit (196 aa).

This sequence belongs to the LeuD family. LeuD type 1 subfamily. As to quaternary structure, heterodimer of LeuC and LeuD.

It catalyses the reaction (2R,3S)-3-isopropylmalate = (2S)-2-isopropylmalate. It participates in amino-acid biosynthesis; L-leucine biosynthesis; L-leucine from 3-methyl-2-oxobutanoate: step 2/4. Catalyzes the isomerization between 2-isopropylmalate and 3-isopropylmalate, via the formation of 2-isopropylmaleate. The sequence is that of 3-isopropylmalate dehydratase small subunit from Streptococcus gordonii (strain Challis / ATCC 35105 / BCRC 15272 / CH1 / DL1 / V288).